A 434-amino-acid polypeptide reads, in one-letter code: Trigger factor (434 aa).

Positions 161–246 (GDRVVIDFAG…VKGVEAPILP (86 aa)) constitute a PPIase FKBP-type domain.

The protein belongs to the FKBP-type PPIase family. Tig subfamily.

It localises to the cytoplasm. The catalysed reaction is [protein]-peptidylproline (omega=180) = [protein]-peptidylproline (omega=0). Its function is as follows. Involved in protein export. Acts as a chaperone by maintaining the newly synthesized protein in an open conformation. Functions as a peptidyl-prolyl cis-trans isomerase. In Aromatoleum aromaticum (strain DSM 19018 / LMG 30748 / EbN1) (Azoarcus sp. (strain EbN1)), this protein is Trigger factor.